A 29-amino-acid polypeptide reads, in one-letter code: Trypsin inhibitor 1 (29 aa).

3 disulfides stabilise this stretch: cysteine 3-cysteine 20, cysteine 10-cysteine 22, and cysteine 16-cysteine 28.

Belongs to the protease inhibitor I7 (squash-type serine protease inhibitor) family.

Its subcellular location is the secreted. Its function is as follows. Inhibits trypsin. The sequence is that of Trypsin inhibitor 1 from Cucurbita maxima (Pumpkin).